The chain runs to 146 residues: Cytochrome c oxidase assembly factor 1 homolog (146 aa).

Over 1–14 the chain is Mitochondrial matrix; that stretch reads MMWQKYAGSRRSMP. Residues 15 to 37 form a helical membrane-spanning segment; sequence LGARILFHGVFYAGGFAIVYYLI. Over 38-146 the chain is Mitochondrial intermembrane; it reads QKFHSRALYY…GENGDEVKKE (109 aa).

It belongs to the COA1 family. In terms of assembly, component of the MITRAC (mitochondrial translation regulation assembly intermediate of cytochrome c oxidase complex) complex, the core components of this complex being COA3/MITRAC12 and COX14. Interacts with COX17 and COA6. Part of the mitochondrial complex I assembly/MCIA complex that comprises at least the core subunits TMEM126B, NDUFAF1, ECSIT and ACAD9 and complement subunits such as COA1 and TMEM186.

The protein resides in the mitochondrion inner membrane. Component of the MITRAC (mitochondrial translation regulation assembly intermediate of cytochrome c oxidase complex) complex, that regulates cytochrome c oxidase assembly. MITRAC complexes regulate both translation of mitochondrial encoded components and assembly of nuclear-encoded components imported in mitochondrion. Required for assembly of mitochondrial respiratory chain complex I and complex IV. As part of the MCIA complex, required for efficient assembly of the mitochondrial complex I. This is Cytochrome c oxidase assembly factor 1 homolog from Homo sapiens (Human).